We begin with the raw amino-acid sequence, 470 residues long: MTGKEKKLWGGRFQEKPSSILERIGESVSFDHKLYKEDIQGSIAHARMLKQIGILSGDELSKIETSLSQIKTELEEGKLEFKSELEDIHMHIESRLTELIGETGKKLHTARSRNDQVTQDVRLYILGRGKEILRSIVSLRFSLYEKAKRSVDVIIPGYTHLQVAQPIRASQYLLSWFWALERDQEFFRFALKASDELALGGGAMAGVNYATDREFLKKELGLSKVSPNSMDGVSSRDHILEFLFACTQLMIHASRICEDIILYSSQEFGILKLSDSLTTGSSIMPQKKNPDIAELIRGKAGRVIGNLNHLLVMLKGLPSTYNRDLQEDKLALFDSVETVEISLEGIREMIEDWVWVPERAESSLKNGFATATDLADFLVYEKKVPFRTAHELVGTLVRVCVEQKRTLFDLPEPDRIAVSEHFVGKEYENAVSLSLSADKKISYGGTSKKRQEEQLKIALESLKQTETLFL.

Belongs to the lyase 1 family. Argininosuccinate lyase subfamily.

The protein resides in the cytoplasm. The catalysed reaction is 2-(N(omega)-L-arginino)succinate = fumarate + L-arginine. Its pathway is amino-acid biosynthesis; L-arginine biosynthesis; L-arginine from L-ornithine and carbamoyl phosphate: step 3/3. This chain is Argininosuccinate lyase, found in Leptospira borgpetersenii serovar Hardjo-bovis (strain JB197).